A 260-amino-acid chain; its full sequence is Indole-3-glycerol phosphate synthase (260 aa).

It belongs to the TrpC family.

The catalysed reaction is 1-(2-carboxyphenylamino)-1-deoxy-D-ribulose 5-phosphate + H(+) = (1S,2R)-1-C-(indol-3-yl)glycerol 3-phosphate + CO2 + H2O. Its pathway is amino-acid biosynthesis; L-tryptophan biosynthesis; L-tryptophan from chorismate: step 4/5. This Staphylococcus aureus (strain COL) protein is Indole-3-glycerol phosphate synthase.